The sequence spans 344 residues: L-rhamnose-proton symporter (344 aa).

10 helical membrane-spanning segments follow: residues 4-24 (AITM…CFYA), 38-58 (WSVG…AILL), 72-92 (TLLP…NYGL), 101-121 (MGIG…TPIL), 137-157 (TLLG…AGQL), 175-195 (LVLA…MNAA), 214-234 (LPSY…FCFI), 259-279 (VLLS…YAWG), 290-310 (MSWM…GLVL), and 321-341 (VGVL…VGLG).

Belongs to the L-rhamnose transporter (TC 2.A.7.6) family.

It localises to the cell inner membrane. The enzyme catalyses L-rhamnopyranose(in) + H(+)(in) = L-rhamnopyranose(out) + H(+)(out). Uptake of L-rhamnose across the cytoplasmic membrane with the concomitant transport of protons into the cell (symport system). The chain is L-rhamnose-proton symporter from Enterobacter sp. (strain 638).